Reading from the N-terminus, the 547-residue chain is Probable ABC transporter periplasmic-binding protein SapA (547 aa).

A signal peptide spans 1 to 21 (MRQVLSSLLVIAGLVSGQAIA).

The protein belongs to the bacterial solute-binding protein 5 family.

It is found in the periplasm. In terms of biological role, not part of a putrescine export system. Very similar to a S.typhimurium protein implicated in antimicrobial peptide resistance, but the SapBCDF operon in E.coli is implicated in putrescine export. The polypeptide is Probable ABC transporter periplasmic-binding protein SapA (sapA) (Escherichia coli (strain K12)).